The chain runs to 343 residues: Transmembrane protein 120A (343 aa).

The Cytoplasmic segment spans residues 1 to 132 (MQSPPPDPLG…KQAKFAYKDE (132 aa)). Residue Lys130 participates in CoA binding. The chain crosses the membrane as a helical span at residues 133-152 (YEKFKLYLTIILIVISFTCR). The Extracellular portion of the chain corresponds to 153 to 158 (FLLNSR). The helical transmembrane segment at 159–177 (VTDAAFNFLLVWYYCTLTI) threads the bilayer. Residues 178–190 (RESILINNGSRIK) lie on the Cytoplasmic side of the membrane. Residues Ser187 and Arg188 each coordinate CoA. The helical transmembrane segment at 191 to 209 (GWWVFHHYVSTFLSGVMLT) threads the bilayer. Residues 210–218 (WPDGLMYQK) lie on the Extracellular side of the membrane. The helical transmembrane segment at 219–240 (FRNQFLSFSMYQSFVQFLQYYY) threads the bilayer. CoA contacts are provided by Gln237, Tyr240, Gln241, and His283. Residues 241–270 (QSGCLYRLRALGERHTMDLTVEGFQSWMWR) lie on the Cytoplasmic side of the membrane. Residues 271 to 294 (GLTFLLPFLFFGHFWQLFNALTLF) form a helical membrane-spanning segment. Residues 295-304 (NLARDPECKE) are Extracellular-facing. Residues 305–330 (WQVLMCGLPFLLLFLGNFFTTLRVVH) traverse the membrane as a helical segment. Residues 331-343 (QKFHSQQHGSKKD) are Cytoplasmic-facing. Residue Lys332 participates in CoA binding.

Belongs to the TMEM120 family. As to quaternary structure, homodimer. Forms heterooligomer with TMEM120B. Interacts with PKD2; TMEM120A inhibits PKD2 channel activity through the physical association of PKD2 with TMEM120A.

The protein resides in the cell membrane. It is found in the nucleus inner membrane. The protein localises to the endoplasmic reticulum. In terms of biological role, multifunctional protein involved in mechanosensation, and plays an essential role in lipid metabolism and adipocyte differentiation. May function as a potential ion channel involved in sensing mechanical stimuli. Mediates the mechanosensitivity of the PKD2-TMEM120A channel complex through direct physical interaction. TMEM120A seems to affect mechanosensation by inhibiting PIEZO2 channels, possibly by altering cellular lipid content. TMEM120A is structurally similar to a lipid-modifying enzyme, ELOVL7, and contains a bound coenzyme A molecule, which suggests it might function as an enzyme in lipid metabolism. Additionnaly, implicated in innate immune response against Zika virus. Acts as a key activator of the antiviral signaling involving STING1. This is Transmembrane protein 120A from Rattus norvegicus (Rat).